A 331-amino-acid chain; its full sequence is Cytosolic 5'-nucleotidase 3A (331 aa).

D83 functions as the Nucleophile in the catalytic mechanism. Residues D83 and D85 each coordinate Mg(2+). Catalysis depends on D85, which acts as the Proton donor. CMP is bound at residue E130. 2 residues coordinate N(7)-methyl-GMP: E130 and S151. Residues 198–199 and K247 contribute to the substrate site; that span reads SA. Mg(2+) is bound at residue D272.

It belongs to the pyrimidine 5'-nucleotidase family.

The protein localises to the cytoplasm. The catalysed reaction is N(7)-methyl-GMP + H2O = N(7)-methylguanosine + phosphate. It catalyses the reaction a ribonucleoside 5'-phosphate + H2O = a ribonucleoside + phosphate. Its function is as follows. Nucleotidase which shows specific activity towards cytidine monophosphate (CMP) and 7-methylguanosine monophosphate (m(7)GMP). CMP seems to be the preferred substrate. The chain is Cytosolic 5'-nucleotidase 3A (NT5C3A) from Gallus gallus (Chicken).